Consider the following 394-residue polypeptide: 1-deoxy-D-xylulose 5-phosphate reductoisomerase (394 aa).

Thr13, Gly14, Ser15, Val16, Arg40, Gln41, and Asn127 together coordinate NADPH. Lys128 contacts 1-deoxy-D-xylulose 5-phosphate. Glu129 contacts NADPH. Asp153 serves as a coordination point for Mn(2+). Residues Ser154, Glu155, Ser184, and His207 each coordinate 1-deoxy-D-xylulose 5-phosphate. A Mn(2+)-binding site is contributed by Glu155. Gly213 is a binding site for NADPH. The 1-deoxy-D-xylulose 5-phosphate site is built by Ser220, Asn225, Lys226, and Glu229. Residue Glu229 participates in Mn(2+) binding.

This sequence belongs to the DXR family. Mg(2+) is required as a cofactor. The cofactor is Mn(2+).

The catalysed reaction is 2-C-methyl-D-erythritol 4-phosphate + NADP(+) = 1-deoxy-D-xylulose 5-phosphate + NADPH + H(+). Its pathway is isoprenoid biosynthesis; isopentenyl diphosphate biosynthesis via DXP pathway; isopentenyl diphosphate from 1-deoxy-D-xylulose 5-phosphate: step 1/6. Catalyzes the NADPH-dependent rearrangement and reduction of 1-deoxy-D-xylulose-5-phosphate (DXP) to 2-C-methyl-D-erythritol 4-phosphate (MEP). The protein is 1-deoxy-D-xylulose 5-phosphate reductoisomerase of Chromobacterium violaceum (strain ATCC 12472 / DSM 30191 / JCM 1249 / CCUG 213 / NBRC 12614 / NCIMB 9131 / NCTC 9757 / MK).